A 321-amino-acid chain; its full sequence is Probable transaldolase (321 aa).

The Schiff-base intermediate with substrate role is filled by Lys-133.

The protein belongs to the transaldolase family. Type 1 subfamily. In terms of assembly, homodimer.

Its subcellular location is the cytoplasm. It carries out the reaction D-sedoheptulose 7-phosphate + D-glyceraldehyde 3-phosphate = D-erythrose 4-phosphate + beta-D-fructose 6-phosphate. The protein operates within carbohydrate degradation; pentose phosphate pathway; D-glyceraldehyde 3-phosphate and beta-D-fructose 6-phosphate from D-ribose 5-phosphate and D-xylulose 5-phosphate (non-oxidative stage): step 2/3. In terms of biological role, transaldolase is important for the balance of metabolites in the pentose-phosphate pathway. The sequence is that of Probable transaldolase (tal) from Dictyostelium discoideum (Social amoeba).